Reading from the N-terminus, the 223-residue chain is Endonuclease V (223 aa).

Asp35 and Asp103 together coordinate Mg(2+).

Belongs to the endonuclease V family. Mg(2+) serves as cofactor.

It localises to the cytoplasm. The catalysed reaction is Endonucleolytic cleavage at apurinic or apyrimidinic sites to products with a 5'-phosphate.. In terms of biological role, DNA repair enzyme involved in the repair of deaminated bases. Selectively cleaves double-stranded DNA at the second phosphodiester bond 3' to a deoxyinosine leaving behind the intact lesion on the nicked DNA. This Klebsiella pneumoniae subsp. pneumoniae (strain ATCC 700721 / MGH 78578) protein is Endonuclease V.